Reading from the N-terminus, the 235-residue chain is High affinity immunoglobulin epsilon receptor subunit beta (235 aa).

A disordered region spans residues 1 to 23 (MDTENRSRADLALPNPQESSSAP). At 1 to 51 (MDTENRSRADLALPNPQESSSAPDIELLEASPAKAAPPKQTWRTFLKKELE) the chain is on the cytoplasmic side. Residues 52-71 (FLGATQILVGLICLCFGTIV) form a helical membrane-spanning segment. Residues 72 to 89 (CSVLYVSDFDEEVLLLYK) lie on the Extracellular side of the membrane. The chain crosses the membrane as a helical span at residues 90 to 109 (LGYPFWGAVLFVLSGFLSII). The Cytoplasmic segment spans residues 110–122 (SERKNTLYLVRGS). The chain crosses the membrane as a helical span at residues 123–142 (LGANIVSSIAAGTGIAMLIL). Residues 143 to 171 (NLTNNFAYMNNCKNVTEDDGCFVASFTTE) lie on the Extracellular side of the membrane. The helical transmembrane segment at 172 to 191 (LVLMMLFLTILAFCSAVLFT) threads the bilayer. The Cytoplasmic portion of the chain corresponds to 192-235 (IYRIGQELESKKVPDDRLYEELNVYSPIYSELEDKGETSSPVDS). Phosphotyrosine is present on residues tyrosine 210 and tyrosine 216. The residue at position 217 (serine 217) is a Phosphoserine. Tyrosine 220 carries the post-translational modification Phosphotyrosine.

The protein belongs to the MS4A family. In terms of assembly, tetramer of an alpha chain, a beta chain, and two disulfide linked gamma chains. Binds LILRB1. Interacts with FGR. Interacts with FGR and FES/FPS. Interacts with LYN. Post-translationally, phosphorylated on tyrosine residues by LYN.

It is found in the membrane. Functionally, high affinity receptor that binds to the Fc region of immunoglobulins epsilon. Aggregation of FCER1 by multivalent antigens is required for the full mast cell response, including the release of preformed mediators (such as histamine) by degranulation and de novo production of lipid mediators and cytokines. Also mediates the secretion of important lymphokines. Binding of allergen to receptor-bound IgE leads to cell activation and the release of mediators responsible for the manifestations of allergy. The chain is High affinity immunoglobulin epsilon receptor subunit beta (Ms4a2) from Mus musculus (Mouse).